A 355-amino-acid polypeptide reads, in one-letter code: Probable tRNA-dihydrouridine synthase 1 (355 aa).

FMN contacts are provided by residues 48-50 and Gln102; that span reads PLS. Cys132 (proton donor) is an active-site residue. FMN-binding positions include Lys171, 232 to 234, and 256 to 257; these read NGD and SR.

Belongs to the Dus family. The cofactor is FMN.

It catalyses the reaction a 5,6-dihydrouridine in tRNA + NAD(+) = a uridine in tRNA + NADH + H(+). The catalysed reaction is a 5,6-dihydrouridine in tRNA + NADP(+) = a uridine in tRNA + NADPH + H(+). Catalyzes the synthesis of 5,6-dihydrouridine (D), a modified base found in the D-loop of most tRNAs, via the reduction of the C5-C6 double bond in target uridines. The protein is Probable tRNA-dihydrouridine synthase 1 (dus1) of Synechocystis sp. (strain ATCC 27184 / PCC 6803 / Kazusa).